The chain runs to 302 residues: Surfeit locus protein 4 homolog (302 aa).

6 consecutive transmembrane segments (helical) span residues 95–115 (APLL…LVVF), 120–140 (AYAI…YGLI), 193–213 (VLLI…ISWT), 215–235 (ILVH…FKAK), 236–256 (FFAA…NSFW), and 271–291 (DFFQ…TGPG). Residues 299-302 (KKIY) carry the Di-lysine motif motif.

This sequence belongs to the SURF4 family.

It localises to the endoplasmic reticulum membrane. This Schizosaccharomyces pombe (strain 972 / ATCC 24843) (Fission yeast) protein is Surfeit locus protein 4 homolog.